The chain runs to 431 residues: Argininosuccinate lyase (431 aa).

This sequence belongs to the lyase 1 family. Argininosuccinate lyase subfamily.

The protein localises to the cytoplasm. The catalysed reaction is 2-(N(omega)-L-arginino)succinate = fumarate + L-arginine. It functions in the pathway amino-acid biosynthesis; L-arginine biosynthesis; L-arginine from L-ornithine and carbamoyl phosphate: step 3/3. The polypeptide is Argininosuccinate lyase (Stenotrophomonas maltophilia (strain K279a)).